A 162-amino-acid chain; its full sequence is Caveolin-2 (162 aa).

The Cytoplasmic segment spans residues 1–86; it reads MGLETEKADV…FEISKYVMYK (86 aa). Residue tyrosine 19 is modified to Phosphotyrosine. Phosphoserine is present on residues serine 20 and serine 36. An intramembrane region (helical) is located at residues 87–107; that stretch reads FLTVFLAIPLAFVAGILFATL. The Cytoplasmic segment spans residues 108–162; it reads SCLHIWIIMPFVKTCLMVLPSVQTIWKSVTDVIIAPLCTSVGRSFSSISLQLSHD.

This sequence belongs to the caveolin family. In terms of assembly, homodimer. Caveolin-1 and -2 colocalize and form a stable hetero-oligomeric complex.

Its subcellular location is the golgi apparatus membrane. The protein resides in the cell membrane. It localises to the membrane. It is found in the caveola. In terms of biological role, may act as a scaffolding protein within caveolar membranes. Interacts directly with G-protein alpha subunits and can functionally regulate their activity. Caveolin-2 may function as an accessory protein in conjunction with caveolin-1. The chain is Caveolin-2 (CAV2) from Microcebus murinus (Gray mouse lemur).